The sequence spans 90 residues: Elongation factor 1-beta (90 aa).

Belongs to the EF-1-beta/EF-1-delta family.

In terms of biological role, promotes the exchange of GDP for GTP in EF-1-alpha/GDP, thus allowing the regeneration of EF-1-alpha/GTP that could then be used to form the ternary complex EF-1-alpha/GTP/AAtRNA. This chain is Elongation factor 1-beta, found in Staphylothermus marinus (strain ATCC 43588 / DSM 3639 / JCM 9404 / F1).